Consider the following 609-residue polypeptide: Tyrosyl-DNA phosphodiesterase 1 (609 aa).

Residues 1-12 show a composition bias toward polar residues; sequence MSQESSYGKWTI. The segment at 1-155 is disordered; sequence MSQESSYGKW…YETSGEGQDI (155 aa). A Phosphoserine modification is found at Ser61. Positions 105–118 are enriched in basic and acidic residues; that stretch reads QPKRVLPQEKKHVS. 2 positions are modified to phosphoserine: Ser119 and Ser132. Thr148 is modified (phosphothreonine). Position 149 is a phosphoserine (Ser149). The active-site Nucleophile is the His264. Lys266 serves as a coordination point for substrate. The interaction with DNA stretch occupies residues 401 to 404; the sequence is SIGS. The active-site Proton donor/acceptor is the His494. A substrate-binding site is contributed by Lys496.

It belongs to the tyrosyl-DNA phosphodiesterase family. In terms of assembly, monomer. In terms of tissue distribution, ubiquitous.

Its subcellular location is the nucleus. The protein resides in the cytoplasm. Its function is as follows. DNA repair enzyme that can remove a variety of covalent adducts from DNA through hydrolysis of a 3'-phosphodiester bond, giving rise to DNA with a free 3' phosphate. Catalyzes the hydrolysis of dead-end complexes between DNA and the topoisomerase I active site tyrosine residue. Hydrolyzes 3'-phosphoglycolates on protruding 3' ends on DNA double-strand breaks due to DNA damage by radiation and free radicals. Acts on blunt-ended double-strand DNA breaks and on single-stranded DNA. Has low 3'exonuclease activity and can remove a single nucleoside from the 3'end of DNA and RNA molecules with 3'hydroxyl groups. Has no exonuclease activity towards DNA or RNA with a 3'phosphate. This is Tyrosyl-DNA phosphodiesterase 1 (Tdp1) from Mus musculus (Mouse).